Reading from the N-terminus, the 66-residue chain is Large ribosomal subunit protein bL35 (66 aa).

It belongs to the bacterial ribosomal protein bL35 family.

This is Large ribosomal subunit protein bL35 from Rhodopseudomonas palustris (strain BisB18).